The following is a 318-amino-acid chain: Transaldolase (318 aa).

Lys-132 functions as the Schiff-base intermediate with substrate in the catalytic mechanism.

It belongs to the transaldolase family. Type 1 subfamily. Homodimer.

It localises to the cytoplasm. The catalysed reaction is D-sedoheptulose 7-phosphate + D-glyceraldehyde 3-phosphate = D-erythrose 4-phosphate + beta-D-fructose 6-phosphate. Its pathway is carbohydrate degradation; pentose phosphate pathway; D-glyceraldehyde 3-phosphate and beta-D-fructose 6-phosphate from D-ribose 5-phosphate and D-xylulose 5-phosphate (non-oxidative stage): step 2/3. Transaldolase is important for the balance of metabolites in the pentose-phosphate pathway. The chain is Transaldolase from Shewanella putrefaciens (strain CN-32 / ATCC BAA-453).